A 237-amino-acid chain; its full sequence is 7-cyano-7-deazaguanine synthase (237 aa).

10 to 20 lines the ATP pocket; it reads FSGGQDSTTCL. Residues Cys189, Cys198, Cys201, and Cys204 each contribute to the Zn(2+) site.

This sequence belongs to the QueC family. Zn(2+) is required as a cofactor.

The catalysed reaction is 7-carboxy-7-deazaguanine + NH4(+) + ATP = 7-cyano-7-deazaguanine + ADP + phosphate + H2O + H(+). It participates in purine metabolism; 7-cyano-7-deazaguanine biosynthesis. In terms of biological role, catalyzes the ATP-dependent conversion of 7-carboxy-7-deazaguanine (CDG) to 7-cyano-7-deazaguanine (preQ(0)). The chain is 7-cyano-7-deazaguanine synthase from Aeromonas salmonicida (strain A449).